The sequence spans 561 residues: Phosphatidylinositol 4-kinase gamma 1 (561 aa).

Residues 121-416 form the PI3K/PI4K catalytic domain; that stretch reads GAQPLLLPSG…SVFGKTSEDS (296 aa). The G-loop stretch occupies residues 127–133; that stretch reads LPSGMGG. ATP contacts are provided by residues 128–134, lysine 149, and 233–236; these read PSGMGGA and QRFV. The catalytic loop stretch occupies residues 266–274; it reads LNLDRHAGN. An activation loop region spans residues 296–322; that stretch reads PIDHGLCLPECLDDPYFEWLNWPQALV. Aspartate 298 lines the ATP pocket. Residues 456–520 are disordered; sequence PPLVPRGPRA…PISPNHDESK (65 aa). The span at 467–484 shows a compositional bias: polar residues; sequence TIPNDVTASMSSSQNQRI.

The protein belongs to the PI3/PI4-kinase family. Type II PI4K subfamily.

It catalyses the reaction a 1,2-diacyl-sn-glycero-3-phospho-(1D-myo-inositol) + ATP = a 1,2-diacyl-sn-glycero-3-phospho-(1D-myo-inositol 4-phosphate) + ADP + H(+). The phosphorylation of phosphatidylinositol (PI) to PI4P is the first committed step in the generation of phosphatidylinositol 4,5-bisphosphate (PIP2), a precursor of the second messenger inositol 1,4,5-trisphosphate (InsP3). The polypeptide is Phosphatidylinositol 4-kinase gamma 1 (PI4KG1) (Arabidopsis thaliana (Mouse-ear cress)).